Reading from the N-terminus, the 359-residue chain is UDP-N-acetylglucosamine--N-acetylmuramyl-(pentapeptide) pyrophosphoryl-undecaprenol N-acetylglucosamine transferase (359 aa).

UDP-N-acetyl-alpha-D-glucosamine contacts are provided by residues 15 to 17, Asn-127, Arg-166, Ser-191, Ile-245, 264 to 269, and Gln-290; these read TGG and ALTVSE.

It belongs to the glycosyltransferase 28 family. MurG subfamily.

It localises to the cell inner membrane. It catalyses the reaction di-trans,octa-cis-undecaprenyl diphospho-N-acetyl-alpha-D-muramoyl-L-alanyl-D-glutamyl-meso-2,6-diaminopimeloyl-D-alanyl-D-alanine + UDP-N-acetyl-alpha-D-glucosamine = di-trans,octa-cis-undecaprenyl diphospho-[N-acetyl-alpha-D-glucosaminyl-(1-&gt;4)]-N-acetyl-alpha-D-muramoyl-L-alanyl-D-glutamyl-meso-2,6-diaminopimeloyl-D-alanyl-D-alanine + UDP + H(+). Its pathway is cell wall biogenesis; peptidoglycan biosynthesis. Functionally, cell wall formation. Catalyzes the transfer of a GlcNAc subunit on undecaprenyl-pyrophosphoryl-MurNAc-pentapeptide (lipid intermediate I) to form undecaprenyl-pyrophosphoryl-MurNAc-(pentapeptide)GlcNAc (lipid intermediate II). The polypeptide is UDP-N-acetylglucosamine--N-acetylmuramyl-(pentapeptide) pyrophosphoryl-undecaprenol N-acetylglucosamine transferase (Pseudomonas putida (strain GB-1)).